The primary structure comprises 86 residues: Putative regulatory protein OB1501 (86 aa).

This sequence belongs to the RemA family.

In Oceanobacillus iheyensis (strain DSM 14371 / CIP 107618 / JCM 11309 / KCTC 3954 / HTE831), this protein is Putative regulatory protein OB1501.